Here is a 354-residue protein sequence, read N- to C-terminus: MEVIARPPLSRWSYRHVLDLAAFSQEDYATVLELASRFRALPMSGPRRLPALQGRLVTTLFFEPSTRTRSSFELAARRLSADVQSFSPASSALAKGESLLDTARTYVAMGADVLVVRHRCAGVPAELARDLEAAGCRTAVLNAGDGLHSHPSQALLDLFTLARHFNPETPTLEALAGKRIVIVGDVLHSRVARSNLWSLTACGVDVVLCGPASLLPDAFAQFTHAPPPGQAQDLVAQRGSLRIERDLDRALEGADAVMTLRLQQERMKEQLITSLEAYHQRYGLSHRRLERCGKSVPVLHPGPVNRGVELSGELLDDPSRSLVEEQVRNGIPVRMALLYLMAASEPASSAAGLS.

Residues Arg-67 and Thr-68 each contribute to the carbamoyl phosphate site. Residue Lys-95 participates in L-aspartate binding. Carbamoyl phosphate-binding residues include Arg-117, His-150, and Gln-153. Arg-190 and Arg-261 together coordinate L-aspartate. Residues Gly-302 and Pro-303 each contribute to the carbamoyl phosphate site.

Belongs to the aspartate/ornithine carbamoyltransferase superfamily. ATCase family. In terms of assembly, heterododecamer (2C3:3R2) of six catalytic PyrB chains organized as two trimers (C3), and six regulatory PyrI chains organized as three dimers (R2).

It catalyses the reaction carbamoyl phosphate + L-aspartate = N-carbamoyl-L-aspartate + phosphate + H(+). It functions in the pathway pyrimidine metabolism; UMP biosynthesis via de novo pathway; (S)-dihydroorotate from bicarbonate: step 2/3. Its function is as follows. Catalyzes the condensation of carbamoyl phosphate and aspartate to form carbamoyl aspartate and inorganic phosphate, the committed step in the de novo pyrimidine nucleotide biosynthesis pathway. The sequence is that of Aspartate carbamoyltransferase catalytic subunit from Synechococcus sp. (strain RCC307).